Reading from the N-terminus, the 106-residue chain is Large ribosomal subunit protein bL21 (106 aa).

The protein belongs to the bacterial ribosomal protein bL21 family. As to quaternary structure, part of the 50S ribosomal subunit. Contacts protein L20.

This protein binds to 23S rRNA in the presence of protein L20. In Chlamydia caviae (strain ATCC VR-813 / DSM 19441 / 03DC25 / GPIC) (Chlamydophila caviae), this protein is Large ribosomal subunit protein bL21.